A 294-amino-acid polypeptide reads, in one-letter code: 4-diphosphocytidyl-2-C-methyl-D-erythritol kinase (294 aa).

The active site involves lysine 11. Residue 96-106 (PVAAGIGGGSA) coordinates ATP. Aspartate 138 is a catalytic residue.

This sequence belongs to the GHMP kinase family. IspE subfamily.

It catalyses the reaction 4-CDP-2-C-methyl-D-erythritol + ATP = 4-CDP-2-C-methyl-D-erythritol 2-phosphate + ADP + H(+). It functions in the pathway isoprenoid biosynthesis; isopentenyl diphosphate biosynthesis via DXP pathway; isopentenyl diphosphate from 1-deoxy-D-xylulose 5-phosphate: step 3/6. Functionally, catalyzes the phosphorylation of the position 2 hydroxy group of 4-diphosphocytidyl-2C-methyl-D-erythritol. This is 4-diphosphocytidyl-2-C-methyl-D-erythritol kinase from Rhodopseudomonas palustris (strain BisB5).